Reading from the N-terminus, the 39-residue chain is Glutenin, high molecular weight subunit PC237 (39 aa).

The protein belongs to the gliadin/glutenin family. Disulfide-bridge linked aggregates.

Glutenins are high-molecular weight seed storage proteins of wheat endosperm. Thought to be responsible for the visco-elastic property of wheat dough. In Triticum aestivum (Wheat), this protein is Glutenin, high molecular weight subunit PC237.